We begin with the raw amino-acid sequence, 97 residues long: Small ribosomal subunit protein uS19 (97 aa).

It belongs to the universal ribosomal protein uS19 family.

Protein S19 forms a complex with S13 that binds strongly to the 16S ribosomal RNA. This is Small ribosomal subunit protein uS19 from Pelagibacter ubique (strain HTCC1062).